We begin with the raw amino-acid sequence, 152 residues long: Transcriptional regulator MraZ (152 aa).

SpoVT-AbrB domains lie at Ala5 to Gln52 and Ala81 to Arg124.

The protein belongs to the MraZ family. In terms of assembly, forms oligomers.

Its subcellular location is the cytoplasm. The protein resides in the nucleoid. The chain is Transcriptional regulator MraZ from Pseudoalteromonas translucida (strain TAC 125).